The primary structure comprises 61 residues: Large ribosomal subunit protein uL30 (61 aa).

This sequence belongs to the universal ribosomal protein uL30 family. In terms of assembly, part of the 50S ribosomal subunit.

This is Large ribosomal subunit protein uL30 from Corynebacterium jeikeium (strain K411).